A 579-amino-acid chain; its full sequence is Zinc finger protein 384 (579 aa).

The segment at 171–198 is disordered; that stretch reads TLTEEGGGGGGGGGTVAPPKPPRGRKKK. Residues 175-185 show a composition bias toward gly residues; that stretch reads EGGGGGGGGGT. 8 consecutive C2H2-type zinc fingers follow at residues 229–251, 257–279, 285–307, 318–340, 346–368, 374–398, 404–426, and 434–456; these read YRCR…SKSH, HKCP…IRIH, YSCN…TRIH, HKCP…LRIH, YNCS…TRIH, YKCA…RRQH, FKCH…LSTH, and YTCT…MRKH. Residues 500-513 show a composition bias toward low complexity; sequence QAQASQASQQQQQQ. A disordered region spans residues 500–553; the sequence is QAQASQASQQQQQQQPPPPQPPHFQSPGAAPQGGGGGDSNQNPPPQCSFDLTPY. Pro residues predominate over residues 514-523; it reads QPPPPQPPHF.

The protein belongs to the krueppel C2H2-type zinc-finger protein family. Interacts with BCAR1. As to expression, expressed in osteocytes, osteoblasts, and chondrocytes in bone.

Its subcellular location is the nucleus. In terms of biological role, transcription factor that binds the consensus DNA sequence [GC]AAAAA. Seems to bind and regulate the promoters of MMP1, MMP3, MMP7 and COL1A1. This is Zinc finger protein 384 (Znf384) from Rattus norvegicus (Rat).